Consider the following 134-residue polypeptide: Estradiol 17-beta-dehydrogenase 8 (134 aa).

Ser-38 contacts substrate. At Lys-42 the chain carries N6-succinyllysine. Tyr-51 serves as the catalytic Proton acceptor. NAD(+)-binding positions include 51–55 (YAASK) and 84–86 (IAT). Position 55 is an N6-succinyllysine (Lys-55).

Belongs to the short-chain dehydrogenases/reductases (SDR) family. Heterotetramer with CBR4; contains two molecules of HSD17B8 and CBR4.

It localises to the mitochondrion matrix. The enzyme catalyses 17beta-estradiol + NAD(+) = estrone + NADH + H(+). The catalysed reaction is 17beta-estradiol + NADP(+) = estrone + NADPH + H(+). It carries out the reaction testosterone + NAD(+) = androst-4-ene-3,17-dione + NADH + H(+). It participates in steroid biosynthesis; estrogen biosynthesis. Its pathway is lipid metabolism; fatty acid biosynthesis. Functionally, NAD-dependent 17-beta-hydroxysteroid dehydrogenase with highest activity towards estradiol. Has very low activity towards testosterone. The heterotetramer with CBR4 has NADH-dependent 3-ketoacyl-acyl carrier protein reductase activity, and thereby plays a role in mitochondrial fatty acid biosynthesis. Within the heterotetramer, HSD17B8 binds NADH; CBR4 binds NADPD. This chain is Estradiol 17-beta-dehydrogenase 8 (HSD17B8), found in Callithrix jacchus (White-tufted-ear marmoset).